Consider the following 166-residue polypeptide: Short form salivary protein D7R1 (166 aa).

The first 21 residues, 1–21 (MFRKVFSVALVTCGLLVIVQA), serve as a signal peptide directing secretion.

Belongs to the PBP/GOBP family. In terms of assembly, interacts with host coagulation factor XII (F12) (inactive and activated) (via amino acids 1-77). Interacts with host high molecular weight kininogen (KNG1) (via amino acids 402-532). In terms of tissue distribution, female salivary gland (at protein level).

Its subcellular location is the secreted. Zn(2+) modulates binding to host coagulation factor XII (F12) and high molecular weight kininogen (KNG1). In terms of biological role, salivary protein with anticoagulant activity that targets the intrinsic blood coagulation pathway in the host. Inhibits activation of the host plasma contact system by preventing the reciprocal activation of host coagulation factor XII (F12) and prekallikrein (KLKB1). Attenuates generation of bradykinin in host plasma. May bind and sequester different mediators involved in the host response, such as serotonin and histamine. The polypeptide is Short form salivary protein D7R1 (Anopheles stephensi (Indo-Pakistan malaria mosquito)).